The following is an 83-amino-acid chain: Apolipoprotein C-I, basic form (83 aa).

Residues 1–26 form the signal peptide; sequence MRLFLSLPVLVVVLSIVLEGPAPAQG.

The protein belongs to the apolipoprotein C1 family.

Its subcellular location is the secreted. Functionally, inhibitor of lipoprotein binding to the low density lipoprotein (LDL) receptor, LDL receptor-related protein, and very low density lipoprotein (VLDL) receptor. Associates with high density lipoproteins (HDL) and the triacylglycerol-rich lipoproteins in the plasma and makes up about 10% of the protein of the VLDL and 2% of that of HDL. Appears to interfere directly with fatty acid uptake and is also the major plasma inhibitor of cholesteryl ester transfer protein (CETP). Binds free fatty acids and reduces their intracellular esterification. Modulates the interaction of APOE with beta-migrating VLDL and inhibits binding of beta-VLDL to the LDL receptor-related protein. The sequence is that of Apolipoprotein C-I, basic form (APOC1B) from Pan troglodytes (Chimpanzee).